A 937-amino-acid chain; its full sequence is Chaperone protein ClpD2, chloroplastic (937 aa).

The transit peptide at 1–80 directs the protein to the chloroplast; the sequence is MEACCCSSSS…FERFTERAVK (80 aa). Repeat regions lie at residues 81–137 and 152–217; these read AVVF…VGKE and FSGA…VQGE. The Clp R domain occupies 81–217; sequence AVVFSQREAR…KQALTRVQGE (137 aa). The tract at residues 259–513 is i; sequence LALFCLDLTM…RMESFKRKKE (255 aa). ATP is bound by residues 304–311 and 658–665; these read GEAGVGKT and GPTGVGKT. The tract at residues 584–775 is II; that stretch reads VGSEEIARVT…LIVMTSNVGS (192 aa).

Belongs to the ClpA/ClpB family. ClpD subfamily. Highly expressed in stems, culms and leaves.

It is found in the plastid. Its subcellular location is the chloroplast. Functionally, molecular chaperone that may interact with a ClpP-like protease involved in degradation of denatured proteins in the chloroplast. In Oryza sativa subsp. japonica (Rice), this protein is Chaperone protein ClpD2, chloroplastic (CLPD2).